Reading from the N-terminus, the 1799-residue chain is 1,3-beta-glucan synthase component FKS1 (1799 aa).

The span at 1 to 11 (MSYPNPPPPPK) shows a compositional bias: pro residues. The segment at 1-136 (MSYPNPPPPP…SNAGHRPRDP (136 aa)) is disordered. The span at 12–23 (GSASFSSSSSDP) shows a compositional bias: low complexity. A compositionally biased stretch (gly residues) spans 51–64 (GAGGAGVAPPGQGG). The segment covering 91–101 (ASESGWSQNEP) has biased composition (polar residues). Helical transmembrane passes span 431–451 (IWVL…PSIY), 470–490 (LGGF…FSYI), 504–524 (LIFL…IAFF), 530–550 (VALI…IAFA), 591–611 (FLLW…FLTL), 648–668 (VMFV…YVIW), 1268–1288 (NILV…LGTL), 1323–1343 (CIIS…VQEL), 1422–1442 (LVLL…YFWI), 1446–1466 (GLCV…DFII), 1527–1547 (IGEI…YLFI), 1563–1583 (IAII…TLFL), 1605–1625 (ALAH…LWFL), 1635–1655 (LGII…IAVF), 1704–1724 (DFIA…IPYF), and 1762–1782 (GLLY…PIIF).

Belongs to the glycosyltransferase 48 family. As to quaternary structure, component of the 1,3-beta-glucan synthase (GS) complex composed of a catalytic subunit FKS1 and a regulatory subunit RHO1.

It is found in the cell membrane. The enzyme catalyses [(1-&gt;3)-beta-D-glucosyl](n) + UDP-alpha-D-glucose = [(1-&gt;3)-beta-D-glucosyl](n+1) + UDP + H(+). Activated by magnesium ions. Inhibited by caspofungin and cilofungin. In terms of biological role, catalytic subunit of the 1,3-beta-glucan synthase (GS) complex. Synthesizes 1,3-beta-glucan, a major structural component of the yeast cell wall. Involved in cell wall synthesis, maintenance and remodeling. In Cryptococcus neoformans var. grubii serotype A (strain H99 / ATCC 208821 / CBS 10515 / FGSC 9487) (Filobasidiella neoformans var. grubii), this protein is 1,3-beta-glucan synthase component FKS1.